A 334-amino-acid chain; its full sequence is Aspartate carbamoyltransferase catalytic subunit (334 aa).

Positions 71 and 72 each coordinate carbamoyl phosphate. Residue Lys-99 coordinates L-aspartate. Arg-121, His-151, and Gln-154 together coordinate carbamoyl phosphate. Residues Arg-184 and Arg-239 each contribute to the L-aspartate site. Positions 280 and 281 each coordinate carbamoyl phosphate.

The protein belongs to the aspartate/ornithine carbamoyltransferase superfamily. ATCase family. In terms of assembly, heterododecamer (2C3:3R2) of six catalytic PyrB chains organized as two trimers (C3), and six regulatory PyrI chains organized as three dimers (R2).

It catalyses the reaction carbamoyl phosphate + L-aspartate = N-carbamoyl-L-aspartate + phosphate + H(+). Its pathway is pyrimidine metabolism; UMP biosynthesis via de novo pathway; (S)-dihydroorotate from bicarbonate: step 2/3. Functionally, catalyzes the condensation of carbamoyl phosphate and aspartate to form carbamoyl aspartate and inorganic phosphate, the committed step in the de novo pyrimidine nucleotide biosynthesis pathway. This is Aspartate carbamoyltransferase catalytic subunit from Pseudomonas fluorescens biotype A.